A 72-amino-acid chain; its full sequence is Crustacean hyperglycemic hormone A (72 aa).

At glutamine 1 the chain carries Pyrrolidone carboxylic acid. A D-phenylalanine; in form CHHA-II modification is found at phenylalanine 3. Disulfide bonds link cysteine 7–cysteine 43, cysteine 23–cysteine 39, and cysteine 26–cysteine 52. Valine 72 is modified (valine amide).

In terms of processing, stereoinversion of L-Phe (in CHHA-I) to D-Phe (in CHHA-II).

It localises to the secreted. Functionally, hormone found in the sinus gland of isopods and decapods which controls the blood sugar level. Has a secretagogue action over the amylase released from the midgut gland. May act as a stress hormone and may be involved in the control of molting and reproduction. The protein is Crustacean hyperglycemic hormone A of Cherax destructor (Common yabby crayfish).